The chain runs to 459 residues: Precorrin-3B synthase (459 aa).

Residues Cys338, Cys344, Cys377, and Cys381 each contribute to the [4Fe-4S] cluster site. Cys381 provides a ligand contact to siroheme.

The protein belongs to the nitrite and sulfite reductase 4Fe-4S domain family.

The enzyme catalyses precorrin-3A + NADH + O2 + 2 H(+) = precorrin-3B + NAD(+) + H2O. The protein operates within cofactor biosynthesis; adenosylcobalamin biosynthesis; cob(II)yrinate a,c-diamide from precorrin-2 (aerobic route): step 2/10. In terms of biological role, catalyzes the elimination of C-20 in precorrin-3A to form precorrin-3B. The chain is Precorrin-3B synthase (cobG) from Sinorhizobium sp.